A 270-amino-acid chain; its full sequence is Monofunctional glycosyltransferase (270 aa).

The interval 1-35 (MKRSDRYKTYNKPNDSNDSNQLHHNTYFKPVNKPQ) is disordered. Residues 11-24 (NKPNDSNDSNQLHH) are compositionally biased toward polar residues. A helical membrane pass occupies residues 47–67 (LLIPILIIIGIIIGVMYALSL).

The protein belongs to the glycosyltransferase 51 family.

The protein resides in the cell membrane. It catalyses the reaction [GlcNAc-(1-&gt;4)-Mur2Ac(oyl-L-Ala-gamma-D-Glu-L-Lys-D-Ala-D-Ala)](n)-di-trans,octa-cis-undecaprenyl diphosphate + beta-D-GlcNAc-(1-&gt;4)-Mur2Ac(oyl-L-Ala-gamma-D-Glu-L-Lys-D-Ala-D-Ala)-di-trans,octa-cis-undecaprenyl diphosphate = [GlcNAc-(1-&gt;4)-Mur2Ac(oyl-L-Ala-gamma-D-Glu-L-Lys-D-Ala-D-Ala)](n+1)-di-trans,octa-cis-undecaprenyl diphosphate + di-trans,octa-cis-undecaprenyl diphosphate + H(+). It participates in cell wall biogenesis; peptidoglycan biosynthesis. In terms of biological role, peptidoglycan polymerase that catalyzes glycan chain elongation using lipid-linked disaccharide-pentapeptide as the substrate. This chain is Monofunctional glycosyltransferase, found in Staphylococcus saprophyticus subsp. saprophyticus (strain ATCC 15305 / DSM 20229 / NCIMB 8711 / NCTC 7292 / S-41).